The following is a 904-amino-acid chain: Eukaryotic translation initiation factor 3 subunit C (904 aa).

2 disordered regions span residues 1–38 and 156–290; these read MSRF…EEED and FRES…TSEK. Positions 22–32 are enriched in polar residues; it reads IQRQTAPQFTF. Acidic residues predominate over residues 161 to 183; it reads DAADDEDEEEEKKEEEESDDEEA. The segment covering 194–206 has biased composition (basic and acidic residues); the sequence is FKKDTVEKVKVEK. Residues 207–232 are compositionally biased toward acidic residues; the sequence is DDDDSDDSIDWGQDSDSDESSSEEEA. Residues 237-247 are compositionally biased toward basic and acidic residues; the sequence is IRERFLKRPEK. The segment covering 257–272 has biased composition (basic residues); the sequence is KEKKKTKETKDSRKKK. In terms of domain architecture, PCI spans 636–812; the sequence is FHMHINLELL…ETVVLHRSEP (177 aa). Positions 847–904 are disordered; sequence RGGNQGYNRDRQNYRNQNQNRENWNNNRRQDRGNRNRNQNRDREQREQHRVEFEEKAE. The segment covering 860–873 has biased composition (low complexity); the sequence is YRNQNQNRENWNNN. The span at 874 to 904 shows a compositional bias: basic and acidic residues; sequence RRQDRGNRNRNQNRDREQREQHRVEFEEKAE.

Belongs to the eIF-3 subunit C family. Component of the eukaryotic translation initiation factor 3 (eIF-3) complex.

Its subcellular location is the cytoplasm. In terms of biological role, component of the eukaryotic translation initiation factor 3 (eIF-3) complex, which is involved in protein synthesis of a specialized repertoire of mRNAs and, together with other initiation factors, stimulates binding of mRNA and methionyl-tRNAi to the 40S ribosome. The eIF-3 complex specifically targets and initiates translation of a subset of mRNAs involved in cell proliferation. In Culex quinquefasciatus (Southern house mosquito), this protein is Eukaryotic translation initiation factor 3 subunit C.